We begin with the raw amino-acid sequence, 50 residues long: Disintegrin pyramidin-A (50 aa).

Positions 1-47 constitute a Disintegrin domain; that stretch reads DCASGPCCRDCKFLKEGTICKRARGDNMDDYCNGKTCDCPRNPHKGE. 4 cysteine pairs are disulfide-bonded: Cys2/Cys11, Cys7/Cys32, Cys8/Cys37, and Cys20/Cys39. Positions 24 to 26 match the Cell attachment site motif; that stretch reads RGD.

Belongs to the venom metalloproteinase (M12B) family. P-II subfamily. P-IIa sub-subfamily. Monomer (disintegrin). Expressed by the venom gland.

The protein resides in the secreted. Functionally, inhibits ADP-induced human platelet aggregation. This Echis pyramidum leakeyi (Leakey's carpet viper) protein is Disintegrin pyramidin-A.